The following is a 345-amino-acid chain: Protein RecA (345 aa).

65–72 (GPESSGKT) contributes to the ATP binding site.

This sequence belongs to the RecA family.

It is found in the cytoplasm. Can catalyze the hydrolysis of ATP in the presence of single-stranded DNA, the ATP-dependent uptake of single-stranded DNA by duplex DNA, and the ATP-dependent hybridization of homologous single-stranded DNAs. It interacts with LexA causing its activation and leading to its autocatalytic cleavage. The sequence is that of Protein RecA from Stenotrophomonas maltophilia (strain R551-3).